The chain runs to 634 residues: Putative ABC transporter ATP-binding protein MG015 homolog (634 aa).

6 helical membrane-spanning segments follow: residues 54–74, 111–131, 189–209, 213–233, 296–316, and 325–345; these read VLYV…NSIL, LTIV…FNVA, VGGQ…ILFV, VIAL…FLFL, VFIY…SISI, and IPSF…IAAL. One can recognise an ABC transmembrane type-1 domain in the interval 54 to 364; it reads VLYVMVCAIF…IFSLWNLIQL (311 aa). Residues 397–631 enclose the ABC transporter domain; that stretch reads IRFEKVVFGY…NGFYARLKRS (235 aa). 430–437 is an ATP binding site; the sequence is GPTGAGKS.

This sequence belongs to the ABC transporter superfamily.

The protein resides in the cell membrane. The protein is Putative ABC transporter ATP-binding protein MG015 homolog of Mycoplasma pneumoniae (strain ATCC 29342 / M129 / Subtype 1) (Mycoplasmoides pneumoniae).